The chain runs to 463 residues: Cysteine--tRNA ligase (463 aa).

Position 27 (cysteine 27) interacts with Zn(2+). The 'HIGH' region signature appears at 29 to 39 (PTVYGLIHIGN). Residues cysteine 207, histidine 232, and glutamate 236 each coordinate Zn(2+). A 'KMSKS' region motif is present at residues 264–268 (KMSKS). Lysine 267 serves as a coordination point for ATP.

It belongs to the class-I aminoacyl-tRNA synthetase family. Monomer. Requires Zn(2+) as cofactor.

It is found in the cytoplasm. The catalysed reaction is tRNA(Cys) + L-cysteine + ATP = L-cysteinyl-tRNA(Cys) + AMP + diphosphate. The chain is Cysteine--tRNA ligase from Pseudothermotoga lettingae (strain ATCC BAA-301 / DSM 14385 / NBRC 107922 / TMO) (Thermotoga lettingae).